Reading from the N-terminus, the 82-residue chain is UPF0213 protein SERP0126 (82 aa).

One can recognise a GIY-YIG domain in the interval 2–77 (DKHFVYIVKC…KTYTRQQKLK (76 aa)).

This sequence belongs to the UPF0213 family.

The chain is UPF0213 protein SERP0126 from Staphylococcus epidermidis (strain ATCC 35984 / DSM 28319 / BCRC 17069 / CCUG 31568 / BM 3577 / RP62A).